Consider the following 315-residue polypeptide: Transaldolase (315 aa).

K131 functions as the Schiff-base intermediate with substrate in the catalytic mechanism.

It belongs to the transaldolase family. Type 1 subfamily. In terms of assembly, homodimer.

Its subcellular location is the cytoplasm. It carries out the reaction D-sedoheptulose 7-phosphate + D-glyceraldehyde 3-phosphate = D-erythrose 4-phosphate + beta-D-fructose 6-phosphate. Its pathway is carbohydrate degradation; pentose phosphate pathway; D-glyceraldehyde 3-phosphate and beta-D-fructose 6-phosphate from D-ribose 5-phosphate and D-xylulose 5-phosphate (non-oxidative stage): step 2/3. Transaldolase is important for the balance of metabolites in the pentose-phosphate pathway. The polypeptide is Transaldolase (Actinobacillus pleuropneumoniae serotype 7 (strain AP76)).